The primary structure comprises 71 residues: Conotoxin ba5b (71 aa).

The first 19 residues, 1–19, serve as a signal peptide directing secretion; that stretch reads MLCLPVFITLLLLVSPSAA. Positions 20-52 are excised as a propeptide; the sequence is LPVESELQRDLTQDSPKDFRIREPLLLSKMFDR. Intrachain disulfides connect C54/C63 and C55/C64. C64 is subject to Cysteine amide. Residues 66 to 71 constitute a propeptide that is removed on maturation; the sequence is RYQRGS.

The protein belongs to the conotoxin T superfamily. As to expression, expressed by the venom duct.

The protein localises to the secreted. The sequence is that of Conotoxin ba5b from Conus bayani (Bayan's cone).